The primary structure comprises 500 residues: MNLKPEEISSIIKQQIKNYENKVELTDTGSVLTVGDGIASVYGLEKAMSGELLEFPGEIYGMALNLEEEVVGAVILGDDSEIKEGDIVKRTGRIVEVPVGEALIGRVVNSLGQPIDGKGPIAYTKTRPVESEAPGIIDRRSVYEPLQTGIKSIDSMIPIGRGQRELIIGDRQTGKTSIVIDTILNQKGKDVICIYVAIGQKRSTIAQLVSSLEKGGALDYTIVVSATASESAPLQYIAPYAGAAMGEEFMYNGKHVLIVYDDLSKQAVAYREMSLLLRRPPGREAYPGDVFYLHSRLLERAAKLSDELGGGSMTALPIIETQAGDVSAYIPTNVISITDGQIYLQPELFYSGVRPAVDPGISVSRVGGSAQIKAMKKVAGTLKLAYSQYRELAAFSQFGSDLDEDTKKRLAQGERIVEILKQGEHQPIKVENQVMIIYAVINNHLEDIPIDNIARFESELYAFVDNNYPEISRKILGGEDFTHDLTDAINEFKEKFVVEV.

169–176 (GDRQTGKT) is an ATP binding site.

The protein belongs to the ATPase alpha/beta chains family. F-type ATPases have 2 components, CF(1) - the catalytic core - and CF(0) - the membrane proton channel. CF(1) has five subunits: alpha(3), beta(3), gamma(1), delta(1), epsilon(1). CF(0) has three main subunits: a(1), b(2) and c(9-12). The alpha and beta chains form an alternating ring which encloses part of the gamma chain. CF(1) is attached to CF(0) by a central stalk formed by the gamma and epsilon chains, while a peripheral stalk is formed by the delta and b chains.

The protein localises to the cell membrane. The catalysed reaction is ATP + H2O + 4 H(+)(in) = ADP + phosphate + 5 H(+)(out). Its function is as follows. Produces ATP from ADP in the presence of a proton gradient across the membrane. The alpha chain is a regulatory subunit. In Clostridioides difficile (strain 630) (Peptoclostridium difficile), this protein is ATP synthase subunit alpha.